Consider the following 167-residue polypeptide: Transmembrane protein 229B (167 aa).

Residues 1 to 14 are Cytoplasmic-facing; the sequence is MASAEPLTALSRWY. A helical transmembrane segment spans residues 15-35; the sequence is LYAIHGYFCEVMFTAAWEFVV. At 36–40 the chain is on the extracellular side; it reads NFNWK. Residues 41–61 form a helical membrane-spanning segment; the sequence is FPGVTSVWALFIYGTSILIVE. Topologically, residues 62–73 are cytoplasmic; it reads RMYLRLRGRCPL. Residues 74 to 94 form a helical membrane-spanning segment; that stretch reads LLRCLIYTLWTYLWEFTTGFI. Residues 95-111 are Extracellular-facing; that stretch reads LRQFNACPWDYSQFDFD. A helical transmembrane segment spans residues 112–132; it reads FMGLITLEYAVPWFCGALLVE. Residues 133 to 167 are Cytoplasmic-facing; it reads QFVIRNTLRLRFDKDAEPGEPSGALALANGHVKTD.

The protein belongs to the TMEM229 family.

It is found in the membrane. The chain is Transmembrane protein 229B (TMEM229B) from Bos taurus (Bovine).